An 816-amino-acid chain; its full sequence is Leucine--tRNA ligase (816 aa).

Residues 40 to 51 (SYPSGAQLHAGH) carry the 'HIGH' region motif. The short motif at 576-580 (KMSKS) is the 'KMSKS' region element. Lysine 579 is an ATP binding site.

Belongs to the class-I aminoacyl-tRNA synthetase family.

It is found in the cytoplasm. The enzyme catalyses tRNA(Leu) + L-leucine + ATP = L-leucyl-tRNA(Leu) + AMP + diphosphate. This Clostridium beijerinckii (strain ATCC 51743 / NCIMB 8052) (Clostridium acetobutylicum) protein is Leucine--tRNA ligase.